A 310-amino-acid polypeptide reads, in one-letter code: Phosphoribosylaminoimidazole-succinocarboxamide synthase (310 aa).

The protein belongs to the SAICAR synthetase family.

The catalysed reaction is 5-amino-1-(5-phospho-D-ribosyl)imidazole-4-carboxylate + L-aspartate + ATP = (2S)-2-[5-amino-1-(5-phospho-beta-D-ribosyl)imidazole-4-carboxamido]succinate + ADP + phosphate + 2 H(+). The protein operates within purine metabolism; IMP biosynthesis via de novo pathway; 5-amino-1-(5-phospho-D-ribosyl)imidazole-4-carboxamide from 5-amino-1-(5-phospho-D-ribosyl)imidazole-4-carboxylate: step 1/2. The protein is Phosphoribosylaminoimidazole-succinocarboxamide synthase of Xanthomonas axonopodis pv. citri (strain 306).